The sequence spans 230 residues: LexA repressor (230 aa).

The H-T-H motif DNA-binding region spans 28–48 (LREIGAHMGIRSTNGVNDHLR). Catalysis depends on for autocatalytic cleavage activity residues Ser-149 and Lys-186.

The protein belongs to the peptidase S24 family. In terms of assembly, homodimer.

The catalysed reaction is Hydrolysis of Ala-|-Gly bond in repressor LexA.. Its function is as follows. Represses a number of genes involved in the response to DNA damage (SOS response), including recA and lexA. In the presence of single-stranded DNA, RecA interacts with LexA causing an autocatalytic cleavage which disrupts the DNA-binding part of LexA, leading to derepression of the SOS regulon and eventually DNA repair. This Sorangium cellulosum (strain So ce56) (Polyangium cellulosum (strain So ce56)) protein is LexA repressor.